We begin with the raw amino-acid sequence, 59 residues long: Cuticle protein 16 isoform D (59 aa).

In Limulus polyphemus (Atlantic horseshoe crab), this protein is Cuticle protein 16 isoform D.